Reading from the N-terminus, the 157-residue chain is Transcription elongation factor GreA (157 aa).

Positions 10–76 (THEGKQKLEQ…TLENMIRNAK (67 aa)) form a coiled coil.

Belongs to the GreA/GreB family.

Functionally, necessary for efficient RNA polymerase transcription elongation past template-encoded arresting sites. The arresting sites in DNA have the property of trapping a certain fraction of elongating RNA polymerases that pass through, resulting in locked ternary complexes. Cleavage of the nascent transcript by cleavage factors such as GreA or GreB allows the resumption of elongation from the new 3'terminus. GreA releases sequences of 2 to 3 nucleotides. The chain is Transcription elongation factor GreA from Bacillus velezensis (strain DSM 23117 / BGSC 10A6 / LMG 26770 / FZB42) (Bacillus amyloliquefaciens subsp. plantarum).